The primary structure comprises 236 residues: Small ribosomal subunit protein uS3 (236 aa).

One can recognise a KH type-2 domain in the interval 39 to 107; it reads IRLYVLEELK…ETSLNIVEIH (69 aa).

This sequence belongs to the universal ribosomal protein uS3 family. Part of the 30S ribosomal subunit. Forms a tight complex with proteins S10 and S14.

Binds the lower part of the 30S subunit head. Binds mRNA in the 70S ribosome, positioning it for translation. The protein is Small ribosomal subunit protein uS3 of Bartonella quintana (strain Toulouse) (Rochalimaea quintana).